The chain runs to 92 residues: Putative pterin-4-alpha-carbinolamine dehydratase (92 aa).

The protein belongs to the pterin-4-alpha-carbinolamine dehydratase family.

It catalyses the reaction (4aS,6R)-4a-hydroxy-L-erythro-5,6,7,8-tetrahydrobiopterin = (6R)-L-erythro-6,7-dihydrobiopterin + H2O. This is Putative pterin-4-alpha-carbinolamine dehydratase from Cereibacter sphaeroides (strain ATCC 17023 / DSM 158 / JCM 6121 / CCUG 31486 / LMG 2827 / NBRC 12203 / NCIMB 8253 / ATH 2.4.1.) (Rhodobacter sphaeroides).